Consider the following 102-residue polypeptide: MEPVDPRLEPWNHPGSQPKTACNKCYCKKCCYHCMCCFTKKGLGISYGRKKRSQRRRPPKSSKDHQDPIPEQPLSRQQPGDQTGQKKQKKALEGKTEADPCD.

The segment covering 1-10 (MEPVDPRLEP) has biased composition (basic and acidic residues). Positions 1–20 (MEPVDPRLEPWNHPGSQPKT) are disordered. Residues 1–24 (MEPVDPRLEPWNHPGSQPKTACNK) are interaction with human CREBBP. The tract at residues 1–48 (MEPVDPRLEPWNHPGSQPKTACNKCYCKKCCYHCMCCFTKKGLGISYG) is transactivation. Zn(2+)-binding residues include Cys22, Cys25, and Cys27. The segment at 22–37 (CNKCYCKKCCYHCMCC) is cysteine-rich. Lys28 bears the N6-acetyllysine; by host PCAF mark. 4 residues coordinate Zn(2+): Cys30, His33, Cys34, and Cys37. Residues 38 to 48 (FTKKGLGISYG) are core. Positions 47-102 (YGRKKRSQRRRPPKSSKDHQDPIPEQPLSRQQPGDQTGQKKQKKALEGKTEADPCD) are disordered. Residues 48-60 (GRKKRSQRRRPPK) are compositionally biased toward basic residues. The Nuclear localization signal, RNA-binding (TAR), and protein transduction signature appears at 49–57 (RKKRSQRRR). The segment at 49–87 (RKKRSQRRRPPKSSKDHQDPIPEQPLSRQQPGDQTGQKK) is interaction with the host capping enzyme RNGTT. Lys50 and Lys51 each carry N6-acetyllysine; by host EP300 and GCN5L2. Asymmetric dimethylarginine; by host PRMT6 is present on Arg52. A compositionally biased stretch (polar residues) spans 74-85 (LSRQQPGDQTGQ). Basic and acidic residues predominate over residues 90 to 102 (KALEGKTEADPCD).

It belongs to the lentiviruses Tat family. Interacts with host CCNT1. Associates with the P-TEFb complex composed at least of Tat, P-TEFb (CDK9 and CCNT1), TAR RNA, RNA Pol II. Recruits the HATs CREBBP, TAF1/TFIID, EP300, PCAF and GCN5L2. Interacts with host KAT5/Tip60; this interaction targets the latter to degradation. Interacts with the host deacetylase SIRT1. Interacts with host capping enzyme RNGTT; this interaction stimulates RNGTT. Binds to host KDR, and to the host integrins ITGAV/ITGB3 and ITGA5/ITGB1. Interacts with host KPNB1/importin beta-1 without previous binding to KPNA1/importin alpha-1. Interacts with EIF2AK2. Interacts with host nucleosome assembly protein NAP1L1; this interaction may be required for the transport of Tat within the nucleus, since the two proteins interact at the nuclear rim. Interacts with host C1QBP/SF2P32; this interaction involves lysine-acetylated Tat. Interacts with the host chemokine receptors CCR2, CCR3 and CXCR4. Interacts with host DPP4/CD26; this interaction may trigger an anti-proliferative effect. Interacts with host LDLR. Interacts with the host extracellular matrix metalloproteinase MMP1. Interacts with host PRMT6; this interaction mediates Tat's methylation. Interacts with, and is ubiquitinated by MDM2/Hdm2. Interacts with host PSMC3 and HTATIP2. Interacts with STAB1; this interaction may overcome SATB1-mediated repression of IL2 and IL2RA (interleukin) in T cells by binding to the same domain than HDAC1. Interacts (when acetylated) with human CDK13, thereby increasing HIV-1 mRNA splicing and promoting the production of the doubly spliced HIV-1 protein Nef. Interacts with host TBP; this interaction modulates the activity of transcriptional pre-initiation complex. Interacts with host RELA. Interacts with host PLSCR1; this interaction negatively regulates Tat transactivation activity by altering its subcellular distribution. Post-translationally, asymmetrical arginine methylation by host PRMT6 seems to diminish the transactivation capacity of Tat and affects the interaction with host CCNT1. Acetylation by EP300, CREBBP, GCN5L2/GCN5 and PCAF regulates the transactivation activity of Tat. EP300-mediated acetylation of Lys-50 promotes dissociation of Tat from the TAR RNA through the competitive binding to PCAF's bromodomain. In addition, the non-acetylated Tat's N-terminus can also interact with PCAF. PCAF-mediated acetylation of Lys-28 enhances Tat's binding to CCNT1. Lys-50 is deacetylated by SIRT1. In terms of processing, polyubiquitination by host MDM2 does not target Tat to degradation, but activates its transactivation function and fosters interaction with CCNT1 and TAR RNA. Post-translationally, phosphorylated by EIF2AK2 on serine and threonine residues adjacent to the basic region important for TAR RNA binding and function. Phosphorylation of Tat by EIF2AK2 is dependent on the prior activation of EIF2AK2 by dsRNA.

It localises to the host nucleus. The protein localises to the host nucleolus. It is found in the host cytoplasm. Its subcellular location is the secreted. In terms of biological role, transcriptional activator that increases RNA Pol II processivity, thereby increasing the level of full-length viral transcripts. Recognizes a hairpin structure at the 5'-LTR of the nascent viral mRNAs referred to as the transactivation responsive RNA element (TAR) and recruits the cyclin T1-CDK9 complex (P-TEFb complex) that will in turn hyperphosphorylate the RNA polymerase II to allow efficient elongation. The CDK9 component of P-TEFb and other Tat-activated kinases hyperphosphorylate the C-terminus of RNA Pol II that becomes stabilized and much more processive. Other factors such as HTATSF1/Tat-SF1, SUPT5H/SPT5, and HTATIP2 are also important for Tat's function. Besides its effect on RNA Pol II processivity, Tat induces chromatin remodeling of proviral genes by recruiting the histone acetyltransferases (HATs) CREBBP, EP300 and PCAF to the chromatin. This also contributes to the increase in proviral transcription rate, especially when the provirus integrates in transcriptionally silent region of the host genome. To ensure maximal activation of the LTR, Tat mediates nuclear translocation of NF-kappa-B by interacting with host RELA. Through its interaction with host TBP, Tat may also modulate transcription initiation. Tat can reactivate a latently infected cell by penetrating in it and transactivating its LTR promoter. In the cytoplasm, Tat is thought to act as a translational activator of HIV-1 mRNAs. Its function is as follows. Extracellular circulating Tat can be endocytosed by surrounding uninfected cells via the binding to several surface receptors such as CD26, CXCR4, heparan sulfate proteoglycans (HSPG) or LDLR. Neurons are rarely infected, but they internalize Tat via their LDLR. Through its interaction with nuclear HATs, Tat is potentially able to control the acetylation-dependent cellular gene expression. Modulates the expression of many cellular genes involved in cell survival, proliferation or in coding for cytokines or cytokine receptors. Tat plays a role in T-cell and neurons apoptosis. Tat induced neurotoxicity and apoptosis probably contribute to neuroAIDS. Circulating Tat also acts as a chemokine-like and/or growth factor-like molecule that binds to specific receptors on the surface of the cells, affecting many cellular pathways. In the vascular system, Tat binds to ITGAV/ITGB3 and ITGA5/ITGB1 integrins dimers at the surface of endothelial cells and competes with bFGF for heparin-binding sites, leading to an excess of soluble bFGF. This is Protein Tat from Human immunodeficiency virus type 1 group N (isolate YBF106) (HIV-1).